Here is a 247-residue protein sequence, read N- to C-terminus: MFYLLNSIIMNDVPTPYGMYFQDSATPNQEGILELHDNIMFYLFIILGLVSWLLFTIVRTYSKNPIAYKYIKHGQTIEIIWTIFPAVILLIIAFPSFILLYLCDEVISPAMTIKAIGLQWYWKYEYSDFINDNGETVEFESYVIPEDLLEDGQLRLLDTDTSVVVPVDTHIRFVVTAADVIHDFAVPSLGIKIDAAPGRLNQVSALIQREGVFYGQCSEICGQSHSAMPIKIEAVSLPAFLEWLNEQ.

The signal sequence occupies residues 1-11 (MFYLLNSIIMN). Over 12 to 38 (DVPTPYGMYFQDSATPNQEGILELHDN) the chain is Mitochondrial intermembrane. Residues 39 to 59 (IMFYLFIILGLVSWLLFTIVR) form a helical membrane-spanning segment. Residues 60–78 (TYSKNPIAYKYIKHGQTIE) lie on the Mitochondrial matrix side of the membrane. Residues 79 to 101 (IIWTIFPAVILLIIAFPSFILLY) traverse the membrane as a helical segment. Residues 102 to 247 (LCDEVISPAM…PAFLEWLNEQ (146 aa)) lie on the Mitochondrial intermembrane side of the membrane. Cu cation contacts are provided by His-182, Cys-217, Glu-219, Cys-221, His-225, and Met-228. Glu-219 is a binding site for Mg(2+).

It belongs to the cytochrome c oxidase subunit 2 family. As to quaternary structure, component of the cytochrome c oxidase (complex IV, CIV), a multisubunit enzyme composed of a catalytic core of 3 subunits and several supernumerary subunits. The complex exists as a monomer or a dimer and forms supercomplexes (SCs) in the inner mitochondrial membrane with ubiquinol-cytochrome c oxidoreductase (cytochrome b-c1 complex, complex III, CIII). Cu cation is required as a cofactor. Post-translationally, the signal sequence of COX2 is processed by IMP1.

It is found in the mitochondrion inner membrane. The catalysed reaction is 4 Fe(II)-[cytochrome c] + O2 + 8 H(+)(in) = 4 Fe(III)-[cytochrome c] + 2 H2O + 4 H(+)(out). Its function is as follows. Component of the cytochrome c oxidase, the last enzyme in the mitochondrial electron transport chain which drives oxidative phosphorylation. The respiratory chain contains 3 multisubunit complexes succinate dehydrogenase (complex II, CII), ubiquinol-cytochrome c oxidoreductase (cytochrome b-c1 complex, complex III, CIII) and cytochrome c oxidase (complex IV, CIV), that cooperate to transfer electrons derived from NADH and succinate to molecular oxygen, creating an electrochemical gradient over the inner membrane that drives transmembrane transport and the ATP synthase. Cytochrome c oxidase is the component of the respiratory chain that catalyzes the reduction of oxygen to water. Electrons originating from reduced cytochrome c in the intermembrane space (IMS) are transferred via the dinuclear copper A center (CU(A)) of subunit 2 and heme A of subunit 1 to the active site in subunit 1, a binuclear center (BNC) formed by heme A3 and copper B (CU(B)). The BNC reduces molecular oxygen to 2 water molecules using 4 electrons from cytochrome c in the IMS and 4 protons from the mitochondrial matrix. The chain is Cytochrome c oxidase subunit 2 (COX2) from Kluyveromyces lactis (strain ATCC 8585 / CBS 2359 / DSM 70799 / NBRC 1267 / NRRL Y-1140 / WM37) (Yeast).